The primary structure comprises 42 residues: Photosystem I reaction center subunit IX (42 aa).

Residues 7-27 (YLSTAPVLAAIWFGILAGLLI) traverse the membrane as a helical segment.

Belongs to the PsaJ family.

It is found in the plastid. It localises to the chloroplast thylakoid membrane. May help in the organization of the PsaE and PsaF subunits. The chain is Photosystem I reaction center subunit IX from Staurastrum punctulatum (Green alga).